The primary structure comprises 246 residues: MFPIKSGLEPKRKQELLEFQKQAGLKFKDLRLLDLAFHHRSFSNEHNNFHANNERLEFLGDSVLGLVAASYLYKSFEDRPEGELAKIKASAVSEDALSKTASKLNISNYLVLGRGEEMSGGREKKAILADALEAVIGAYYIDSGFKAAQKFVLRLLESTIHSVLEKKFISDYKSLLQELVQKKFKTVPKYELKKASGPDHDRTFWFSVSINGKVYGPLSGKTKKEAEQSVAKVAYENLCSESTVSK.

An RNase III domain is found at 16–144; sequence LLEFQKQAGL…VIGAYYIDSG (129 aa). Glu-57 provides a ligand contact to Mg(2+). Residue Asp-61 is part of the active site. Mg(2+)-binding residues include Asp-130 and Glu-133. The active site involves Glu-133. The 70-residue stretch at 171–240 folds into the DRBM domain; sequence DYKSLLQELV…AKVAYENLCS (70 aa).

This sequence belongs to the ribonuclease III family. In terms of assembly, homodimer. Requires Mg(2+) as cofactor.

It is found in the cytoplasm. It carries out the reaction Endonucleolytic cleavage to 5'-phosphomonoester.. Digests double-stranded RNA. Involved in the processing of primary rRNA transcript to yield the immediate precursors to the large and small rRNAs (23S and 16S). Processes some mRNAs, and tRNAs when they are encoded in the rRNA operon. Processes pre-crRNA and tracrRNA of type II CRISPR loci if present in the organism. The protein is Ribonuclease 3 of Treponema denticola (strain ATCC 35405 / DSM 14222 / CIP 103919 / JCM 8153 / KCTC 15104).